Reading from the N-terminus, the 620-residue chain is Probable indole-3-acetic acid-amido synthetase GH3.7 (620 aa).

Belongs to the IAA-amido conjugating enzyme family. Ubiquitous.

Its function is as follows. May catalyze the synthesis of indole-3-acetic acid (IAA)-amino acid conjugates, providing a mechanism for the plant to cope with the presence of excess auxin. This is Probable indole-3-acetic acid-amido synthetase GH3.7 (GH3.7) from Oryza sativa subsp. japonica (Rice).